A 678-amino-acid polypeptide reads, in one-letter code: DNA ligase (678 aa).

Residues 47 to 51 (DSDYD), 96 to 97 (SL), and E122 contribute to the NAD(+) site. The active-site N6-AMP-lysine intermediate is the K124. NAD(+) contacts are provided by R145, E182, K300, and K324. Positions 418, 421, 436, and 442 each coordinate Zn(2+). The BRCT domain maps to 602 to 678 (AYNESFTGKT…ILEDNLKDLL (77 aa)).

This sequence belongs to the NAD-dependent DNA ligase family. LigA subfamily. It depends on Mg(2+) as a cofactor. Mn(2+) serves as cofactor.

It carries out the reaction NAD(+) + (deoxyribonucleotide)n-3'-hydroxyl + 5'-phospho-(deoxyribonucleotide)m = (deoxyribonucleotide)n+m + AMP + beta-nicotinamide D-nucleotide.. Its function is as follows. DNA ligase that catalyzes the formation of phosphodiester linkages between 5'-phosphoryl and 3'-hydroxyl groups in double-stranded DNA using NAD as a coenzyme and as the energy source for the reaction. It is essential for DNA replication and repair of damaged DNA. The sequence is that of DNA ligase from Francisella tularensis subsp. holarctica (strain OSU18).